Here is a 283-residue protein sequence, read N- to C-terminus: 4-diphosphocytidyl-2-C-methyl-D-erythritol kinase (283 aa).

Lys8 is an active-site residue. Residue Pro90–Ser100 participates in ATP binding. Asp132 is an active-site residue.

The protein belongs to the GHMP kinase family. IspE subfamily.

It carries out the reaction 4-CDP-2-C-methyl-D-erythritol + ATP = 4-CDP-2-C-methyl-D-erythritol 2-phosphate + ADP + H(+). The protein operates within isoprenoid biosynthesis; isopentenyl diphosphate biosynthesis via DXP pathway; isopentenyl diphosphate from 1-deoxy-D-xylulose 5-phosphate: step 3/6. Functionally, catalyzes the phosphorylation of the position 2 hydroxy group of 4-diphosphocytidyl-2C-methyl-D-erythritol. This is 4-diphosphocytidyl-2-C-methyl-D-erythritol kinase from Chlamydia muridarum (strain MoPn / Nigg).